Consider the following 212-residue polypeptide: Probable GTP-binding protein EngB (212 aa).

In terms of domain architecture, EngB-type G spans 38 to 210 (SLPEIAFVGK…KASLAKCIKP (173 aa)). GTP contacts are provided by residues 46–53 (GKSNVGKS), 73–77 (GRTRQ), 91–94 (DLPG), 158–161 (TKSD), and 189–191 (VSN). Residues Ser-53 and Thr-75 each contribute to the Mg(2+) site.

Belongs to the TRAFAC class TrmE-Era-EngA-EngB-Septin-like GTPase superfamily. EngB GTPase family. Mg(2+) is required as a cofactor.

Necessary for normal cell division and for the maintenance of normal septation. This is Probable GTP-binding protein EngB from Rickettsia conorii (strain ATCC VR-613 / Malish 7).